A 491-amino-acid polypeptide reads, in one-letter code: Aspartyl/glutamyl-tRNA(Asn/Gln) amidotransferase subunit B (491 aa).

The protein belongs to the GatB/GatE family. GatB subfamily. As to quaternary structure, heterotrimer of A, B and C subunits.

The catalysed reaction is L-glutamyl-tRNA(Gln) + L-glutamine + ATP + H2O = L-glutaminyl-tRNA(Gln) + L-glutamate + ADP + phosphate + H(+). The enzyme catalyses L-aspartyl-tRNA(Asn) + L-glutamine + ATP + H2O = L-asparaginyl-tRNA(Asn) + L-glutamate + ADP + phosphate + 2 H(+). Allows the formation of correctly charged Asn-tRNA(Asn) or Gln-tRNA(Gln) through the transamidation of misacylated Asp-tRNA(Asn) or Glu-tRNA(Gln) in organisms which lack either or both of asparaginyl-tRNA or glutaminyl-tRNA synthetases. The reaction takes place in the presence of glutamine and ATP through an activated phospho-Asp-tRNA(Asn) or phospho-Glu-tRNA(Gln). This chain is Aspartyl/glutamyl-tRNA(Asn/Gln) amidotransferase subunit B, found in Burkholderia ambifaria (strain ATCC BAA-244 / DSM 16087 / CCUG 44356 / LMG 19182 / AMMD) (Burkholderia cepacia (strain AMMD)).